The primary structure comprises 184 residues: Ribosome-recycling factor (184 aa).

The interval 133-153 (DSNDELKKQQKNSDITEDDLR) is disordered.

The protein belongs to the RRF family.

It is found in the cytoplasm. Functionally, responsible for the release of ribosomes from messenger RNA at the termination of protein biosynthesis. May increase the efficiency of translation by recycling ribosomes from one round of translation to another. This is Ribosome-recycling factor from Staphylococcus saprophyticus subsp. saprophyticus (strain ATCC 15305 / DSM 20229 / NCIMB 8711 / NCTC 7292 / S-41).